Consider the following 445-residue polypeptide: Probable D-serine dehydratase (445 aa).

Lys-111 bears the N6-(pyridoxal phosphate)lysine mark.

Belongs to the serine/threonine dehydratase family. DsdA subfamily. Pyridoxal 5'-phosphate is required as a cofactor.

It catalyses the reaction D-serine = pyruvate + NH4(+). The sequence is that of Probable D-serine dehydratase from Burkholderia pseudomallei (strain 668).